The primary structure comprises 132 residues: Mercuric resistance operon regulatory protein (132 aa).

Residues 2 to 71 (KFRIGELADK…LNEIDKLLGV (70 aa)) enclose the HTH merR-type domain. A DNA-binding region (H-T-H motif) is located at residues 5 to 24 (IGELADKCGVNKETIRYYER). Positions 79, 114, and 123 each coordinate Hg(2+).

In terms of assembly, homodimer.

In terms of biological role, mediates the mercuric-dependent induction of mercury resistance operon. In the absence of mercury MerR represses transcription by binding tightly to the mer operator region; when mercury is present the dimeric complex binds a single ion and becomes a potent transcriptional activator, while remaining bound to the mer site. The chain is Mercuric resistance operon regulatory protein (merR1) from Bacillus cereus.